The sequence spans 124 residues: Large ribosomal subunit protein bL12 (124 aa).

The protein belongs to the bacterial ribosomal protein bL12 family. As to quaternary structure, homodimer. Part of the ribosomal stalk of the 50S ribosomal subunit. Forms a multimeric L10(L12)X complex, where L10 forms an elongated spine to which 2 to 4 L12 dimers bind in a sequential fashion. Binds GTP-bound translation factors.

In terms of biological role, forms part of the ribosomal stalk which helps the ribosome interact with GTP-bound translation factors. Is thus essential for accurate translation. This chain is Large ribosomal subunit protein bL12, found in Burkholderia thailandensis (strain ATCC 700388 / DSM 13276 / CCUG 48851 / CIP 106301 / E264).